The sequence spans 127 residues: Large ribosomal subunit protein bL21 (127 aa).

The tract at residues 102–127 (TDNAKPTKGPRPKKAKAEAPAADAAE) is disordered.

Belongs to the bacterial ribosomal protein bL21 family. Part of the 50S ribosomal subunit. Contacts protein L20.

Functionally, this protein binds to 23S rRNA in the presence of protein L20. The chain is Large ribosomal subunit protein bL21 from Bradyrhizobium sp. (strain BTAi1 / ATCC BAA-1182).